Reading from the N-terminus, the 532-residue chain is Cytochrome P450 12b1, mitochondrial (532 aa).

Cys-480 lines the heme pocket.

The protein belongs to the cytochrome P450 family. It depends on heme as a cofactor.

It localises to the mitochondrion. Functionally, probably involved in steroid hormones biosynthesis. The protein is Cytochrome P450 12b1, mitochondrial (Cyp12b1) of Drosophila acanthoptera (Fruit fly).